The sequence spans 356 residues: Probable G-protein coupled receptor 32 (356 aa).

The Extracellular segment spans residues 1 to 44; it reads MNGVSEGTRGCSDRQPGVLTRDRSCSRKMNSSGCLSEEVGSLRP. The N-linked (GlcNAc...) asparagine glycan is linked to N30. Residues 45–67 traverse the membrane as a helical segment; sequence LTVVILSASIVVGVLGNGLVLWM. The Cytoplasmic portion of the chain corresponds to 68–78; that stretch reads TVFRMARTVST. A helical transmembrane segment spans residues 79–100; that stretch reads VCFFHLALADFMLSLSLPIAMY. Residues 101 to 116 are Extracellular-facing; that stretch reads YIVSRQWLLGEWACKL. A disulfide bond links C114 and C191. A helical membrane pass occupies residues 117-137; that stretch reads YITFVFLSYFASNCLLVFISV. At 138–156 the chain is on the cytoplasmic side; that stretch reads DRCISVLYPVWALNHRTVQ. The chain crosses the membrane as a helical span at residues 157–178; it reads RASWLAFGVWLLAAALCSAHLK. The Extracellular portion of the chain corresponds to 179–220; that stretch reads FRTTRKWNGCTHCYLAFNSDNETAQIWIEGVVEGHIIGTIGH. The N-linked (GlcNAc...) asparagine glycan is linked to N199. Residues 221–241 form a helical membrane-spanning segment; sequence FLLGFLGPLAIIGTCAHLIRA. The Cytoplasmic portion of the chain corresponds to 242 to 257; the sequence is KLLREGWVHANRPKRL. Residues 258–280 form a helical membrane-spanning segment; sequence LLVLVSAFFIFWSPFNVVLLVHL. The Extracellular segment spans residues 281 to 300; the sequence is WRRVMLKEIYHPRMLLILQA. The helical transmembrane segment at 301–320 threads the bilayer; that stretch reads SFALGCVNSSLNPFLYVFVG. At 321–356 the chain is on the cytoplasmic side; sequence RDFQEKFFQSLTSALARAFGEEEFLSSCPRGNAPRE.

The protein belongs to the G-protein coupled receptor 1 family. Expressed in resting primary human macrophages.

The protein resides in the cell membrane. G-protein coupled receptor that binds to several ligands including resolvin D1 (RvD1) with high affinity, leading to rapid and transient activation of numerous intracellular signaling pathways. In macrophages, enhances the RvD1-stimulated phagocytic and clearance functions. Macrophages migrate less toward different chemoattractant stimuli but phagocytose more microbial particles. Prevents the increase in Ca(2+) and activation of ERK1/2 used by histamine and its H1 receptor subtype to induce goblet cell secretion by activating PKC and GRK2 to counter-regulate the histamine receptor. In Homo sapiens (Human), this protein is Probable G-protein coupled receptor 32 (GPR32).